The primary structure comprises 317 residues: 17-beta-hydroxysteroid dehydrogenase type 6 (317 aa).

An N-terminal signal peptide occupies residues 1–17 (MWLYLAAFVGLYYLLHW). 33–57 (FITGCDSGFGNLLARQLDARGLRVL) is an NAD(+) binding site. A glycan (N-linked (GlcNAc...) asparagine) is linked at N161. S164 serves as a coordination point for substrate. The active-site Proton acceptor is Y176. Residues N215 and N256 are each glycosylated (N-linked (GlcNAc...) asparagine).

Belongs to the short-chain dehydrogenases/reductases (SDR) family. As to expression, detected in liver and prostate (at protein level). Detected in adult liver, lung, brain, placenta, prostate, adrenal gland, testis, mammary gland, spleen, spinal cord and uterus. Detected in caudate nucleus, and at lower levels in amygdala, corpus callosum, hippocampus, substantia nigra and thalamus. Detected in fetal lung, liver and brain.

Its subcellular location is the microsome membrane. It localises to the early endosome membrane. It carries out the reaction all-trans-retinol--[retinol-binding protein] + NAD(+) = all-trans-retinal--[retinol-binding protein] + NADH + H(+). The catalysed reaction is all-trans-retinol + NAD(+) = all-trans-retinal + NADH + H(+). It catalyses the reaction androsterone + NAD(+) = 5alpha-androstan-3,17-dione + NADH + H(+). The enzyme catalyses testosterone + NAD(+) = androst-4-ene-3,17-dione + NADH + H(+). It carries out the reaction 5alpha-androstane-3alpha,17beta-diol + NAD(+) = 17beta-hydroxy-5alpha-androstan-3-one + NADH + H(+). The catalysed reaction is 17beta-estradiol + NAD(+) = estrone + NADH + H(+). It catalyses the reaction 17beta-estradiol + NADP(+) = estrone + NADPH + H(+). The enzyme catalyses 3alpha-hydroxy-5alpha-pregnan-20-one + NAD(+) = 5alpha-pregnane-3,20-dione + NADH + H(+). It carries out the reaction 5alpha-androstane-3beta,17beta-diol + NAD(+) = 17beta-hydroxy-5alpha-androstan-3-one + NADH + H(+). The catalysed reaction is 3beta-hydroxy-5alpha-androstan-17-one + NAD(+) = 5alpha-androstan-3,17-dione + NADH + H(+). Functionally, NAD-dependent oxidoreductase with broad substrate specificity that shows both oxidative and reductive activity (in vitro). Has 17-beta-hydroxysteroid dehydrogenase activity towards various steroids (in vitro). Converts 5-alpha-androstan-3-alpha,17-beta-diol to androsterone and estradiol to estrone (in vitro). Has 3-alpha-hydroxysteroid dehydrogenase activity towards androsterone (in vitro). Has retinol dehydrogenase activity towards all-trans-retinol (in vitro). Can convert androsterone to epi-androsterone. Androsterone is first oxidized to 5-alpha-androstane-3,17-dione and then reduced to epi-andosterone. Can act on both C-19 and C-21 3-alpha-hydroxysteroids. The polypeptide is 17-beta-hydroxysteroid dehydrogenase type 6 (HSD17B6) (Homo sapiens (Human)).